Here is a 453-residue protein sequence, read N- to C-terminus: Kynureninase (453 aa).

Pyridoxal 5'-phosphate is bound by residues L114, T115, F142–D145, D232, H235, and Y257. Position 258 is an N6-(pyridoxal phosphate)lysine (K258). Position 286 (W286) interacts with pyridoxal 5'-phosphate.

The protein belongs to the kynureninase family. In terms of assembly, homodimer. Requires pyridoxal 5'-phosphate as cofactor.

Its subcellular location is the cytoplasm. The catalysed reaction is L-kynurenine + H2O = anthranilate + L-alanine + H(+). The enzyme catalyses 3-hydroxy-L-kynurenine + H2O = 3-hydroxyanthranilate + L-alanine + H(+). It functions in the pathway amino-acid degradation; L-kynurenine degradation; L-alanine and anthranilate from L-kynurenine: step 1/1. The protein operates within cofactor biosynthesis; NAD(+) biosynthesis; quinolinate from L-kynurenine: step 2/3. Functionally, catalyzes the cleavage of L-kynurenine (L-Kyn) and L-3-hydroxykynurenine (L-3OHKyn) into anthranilic acid (AA) and 3-hydroxyanthranilic acid (3-OHAA), respectively. In Cryptococcus neoformans var. neoformans serotype D (strain JEC21 / ATCC MYA-565) (Filobasidiella neoformans), this protein is Kynureninase.